Consider the following 571-residue polypeptide: Proline--tRNA ligase (571 aa).

This sequence belongs to the class-II aminoacyl-tRNA synthetase family. ProS type 1 subfamily. Homodimer.

Its subcellular location is the cytoplasm. It carries out the reaction tRNA(Pro) + L-proline + ATP = L-prolyl-tRNA(Pro) + AMP + diphosphate. Its function is as follows. Catalyzes the attachment of proline to tRNA(Pro) in a two-step reaction: proline is first activated by ATP to form Pro-AMP and then transferred to the acceptor end of tRNA(Pro). As ProRS can inadvertently accommodate and process non-cognate amino acids such as alanine and cysteine, to avoid such errors it has two additional distinct editing activities against alanine. One activity is designated as 'pretransfer' editing and involves the tRNA(Pro)-independent hydrolysis of activated Ala-AMP. The other activity is designated 'posttransfer' editing and involves deacylation of mischarged Ala-tRNA(Pro). The misacylated Cys-tRNA(Pro) is not edited by ProRS. The protein is Proline--tRNA ligase of Haemophilus ducreyi (strain 35000HP / ATCC 700724).